Consider the following 493-residue polypeptide: Lysostaphin (493 aa).

Positions M1 to A23 are cleaved as a signal peptide. The propeptide occupies S24–R247. Tandem repeats lie at residues A49–T61, A62–T74, A75–T87, A88–T100, A101–T113, A114–T126, A127–T139, A140–T152, A153–T165, A166–T178, A179–T191, A192–T204, A205–T217, and A218–T230. The segment at A49–R243 is 15 X 13 AA approximate tandem repeats of A-E-V-E-T-S-K-A-P-V-E-N-T. The tract at residues E52–E232 is disordered. Residues A231–R243 form a 15; approximate repeat. Zn(2+)-binding residues include H279 and D283. Residue H360 is part of the active site. A Zn(2+)-binding site is contributed by H362. One can recognise an SH3b domain in the interval S413 to S481.

It belongs to the peptidase M23B family. As to quaternary structure, monomer. Requires Zn(2+) as cofactor.

Its subcellular location is the secreted. The catalysed reaction is Hydrolysis of the -Gly-|-Gly- bond in the pentaglycine inter-peptide link joining staphylococcal cell wall peptidoglycans.. Its function is as follows. Lyses staphylococcal cells by hydrolyzing the polyglycine interpeptide bridges of the peptidoglycan. The protein is Lysostaphin (lss) of Staphylococcus simulans.